A 67-amino-acid polypeptide reads, in one-letter code: Alpha-conotoxin G1.5 (67 aa).

Positions 1–21 are cleaved as a signal peptide; the sequence is MGMRMMFTVFLLVALATTVVS. Positions 22-47 are excised as a propeptide; that stretch reads FTSDRASDRRNAAVKAFDLISSTVKK. 2 disulfide bridges follow: cysteine 49/cysteine 55 and cysteine 50/cysteine 63. Residue glutamine 65 is modified to Glutamine amide.

Belongs to the conotoxin A superfamily. Expressed by the venom duct.

The protein resides in the secreted. Alpha-conotoxins act on postsynaptic membranes, they bind to the nicotinic acetylcholine receptors (nAChR) and thus inhibit them. Globular isomer (C1-C3; C2-C4) selectively inhibits neuronal (non-muscle) nAChR subtypes particularly human alpha-3-beta-2/CHRNA3-CHRNB2 (IC(50)=35.7 nM) and alpha-9-alpha-10/CHRNA9-CHRNA10 nAChRs (IC(50)=569 nM), while the ribbon isomer (C1-C4; C2-C3) shows weak inhibition on alpha-3-beta-2/CHRNA3-CHRNB2, but not on all other receptors tested. The polypeptide is Alpha-conotoxin G1.5 (Conus geographus (Geography cone)).